The sequence spans 496 residues: Galactose-1-phosphate uridylyltransferase (496 aa).

It belongs to the galactose-1-phosphate uridylyltransferase type 2 family.

Its subcellular location is the cytoplasm. It carries out the reaction alpha-D-galactose 1-phosphate + UDP-alpha-D-glucose = alpha-D-glucose 1-phosphate + UDP-alpha-D-galactose. It functions in the pathway carbohydrate metabolism; galactose metabolism. The polypeptide is Galactose-1-phosphate uridylyltransferase (Staphylococcus saprophyticus subsp. saprophyticus (strain ATCC 15305 / DSM 20229 / NCIMB 8711 / NCTC 7292 / S-41)).